Reading from the N-terminus, the 295-residue chain is MTPSTEALPTAVKAQVLAEALPWLKQLHGKIVVIKYGGNAMTDDTLRRAFAADMAFLRNCGIHPVVVHGGGPQITAMLRRLGIPGDFKGGFRVTTPEVLDVARMVLFGQVGRELVNLINAHGPYAVGITGEDAQLFTAVRRSVTVDGVTTDIGLVGDVERVNAAAVLDLIAARRIPVVSTLAPDAEGVVHNINADTAAAALAEALGAEKLLMLTDVEGLYTSWPNRDSLVSEIDTATLSQLLPTLEAGMIPKVEACLRAVSAGVPSAHVIDGRVEHCVLVELFTDEGTGTKVVSS.

Residues 70–71 (GG), R92, and N191 each bind substrate.

This sequence belongs to the acetylglutamate kinase family. ArgB subfamily.

It localises to the cytoplasm. The catalysed reaction is N-acetyl-L-glutamate + ATP = N-acetyl-L-glutamyl 5-phosphate + ADP. The protein operates within amino-acid biosynthesis; L-arginine biosynthesis; N(2)-acetyl-L-ornithine from L-glutamate: step 2/4. Its function is as follows. Catalyzes the ATP-dependent phosphorylation of N-acetyl-L-glutamate. The chain is Acetylglutamate kinase from Mycolicibacterium paratuberculosis (strain ATCC BAA-968 / K-10) (Mycobacterium paratuberculosis).